We begin with the raw amino-acid sequence, 213 residues long: Uridine kinase (213 aa).

Residue 14–21 (GASASGKS) participates in ATP binding.

It belongs to the uridine kinase family.

It is found in the cytoplasm. It catalyses the reaction uridine + ATP = UMP + ADP + H(+). It carries out the reaction cytidine + ATP = CMP + ADP + H(+). Its pathway is pyrimidine metabolism; CTP biosynthesis via salvage pathway; CTP from cytidine: step 1/3. It participates in pyrimidine metabolism; UMP biosynthesis via salvage pathway; UMP from uridine: step 1/1. This chain is Uridine kinase, found in Vibrio vulnificus (strain CMCP6).